The following is a 433-amino-acid chain: Trigger factor (433 aa).

The PPIase FKBP-type domain maps to 163–248 (GDVVVLDFAA…VHAVKERRLP (86 aa)).

It belongs to the FKBP-type PPIase family. Tig subfamily.

The protein localises to the cytoplasm. The catalysed reaction is [protein]-peptidylproline (omega=180) = [protein]-peptidylproline (omega=0). In terms of biological role, involved in protein export. Acts as a chaperone by maintaining the newly synthesized protein in an open conformation. Functions as a peptidyl-prolyl cis-trans isomerase. This is Trigger factor from Nitratidesulfovibrio vulgaris (strain DP4) (Desulfovibrio vulgaris).